The chain runs to 189 residues: Elongation factor P (189 aa).

Lysine 35 carries the N6-(3,6-diaminohexanoyl)-5-hydroxylysine modification.

The protein belongs to the elongation factor P family. In terms of processing, may be beta-lysylated on the epsilon-amino group of Lys-35 by the combined action of EpmA and EpmB, and then hydroxylated on the C5 position of the same residue by EpmC (if this protein is present). Lysylation is critical for the stimulatory effect of EF-P on peptide-bond formation. The lysylation moiety may extend toward the peptidyltransferase center and stabilize the terminal 3-CCA end of the tRNA. Hydroxylation of the C5 position on Lys-35 may allow additional potential stabilizing hydrogen-bond interactions with the P-tRNA.

The protein resides in the cytoplasm. It functions in the pathway protein biosynthesis; polypeptide chain elongation. In terms of biological role, involved in peptide bond synthesis. Alleviates ribosome stalling that occurs when 3 or more consecutive Pro residues or the sequence PPG is present in a protein, possibly by augmenting the peptidyl transferase activity of the ribosome. Modification of Lys-35 is required for alleviation. The polypeptide is Elongation factor P (Wigglesworthia glossinidia brevipalpis).